The following is a 304-amino-acid chain: Secreted mono- and diacylglycerol lipase MDL4 (304 aa).

The signal sequence occupies residues 1 to 19 (MRFGGVVSLVLGFIVSVLA). Residues C55 and C297 are joined by a disulfide bond. N-linked (GlcNAc...) asparagine glycosylation is found at N102 and N161. The Nucleophile role is filled by S171. The active site involves D228. N253 carries an N-linked (GlcNAc...) asparagine glycan. The active site involves H281.

It belongs to the AB hydrolase superfamily. Lipase family. Class 3 subfamily.

Its subcellular location is the secreted. It is found in the cell wall. The catalysed reaction is a monoacylglycerol + H2O = glycerol + a fatty acid + H(+). It catalyses the reaction a diacylglycerol + H2O = a monoacylglycerol + a fatty acid + H(+). In terms of biological role, secreted lipase involved in Dandruff and seborrheic dermatitis (D/SD) probably via lipase-mediated breakdown of sebaceous lipids and release of irritating free fatty acids. Shows activity against monoglyceride and diglyceride substrates, but not triglyceride substrates and does not exhibit regio-selective production of diacylglycerols. Cleaves oleic acid from 1,2 isomers of diolein on both the 1 and the 2 position of the glycerol backbone, resulting mainly in free fatty acids but no monoolein is detected. Shows activity on monoolein and liberates mostly free fatty acids, but can also perform the reverse reaction and produce diolein. The sequence is that of Secreted mono- and diacylglycerol lipase MDL4 from Malassezia globosa (strain ATCC MYA-4612 / CBS 7966) (Dandruff-associated fungus).